A 209-amino-acid polypeptide reads, in one-letter code: Ribosomal RNA small subunit methyltransferase G (209 aa).

Residues Gly-71, Phe-76, 122–123, and Arg-135 contribute to the S-adenosyl-L-methionine site; that span reads AE.

This sequence belongs to the methyltransferase superfamily. RNA methyltransferase RsmG family.

It localises to the cytoplasm. In terms of biological role, specifically methylates the N7 position of a guanine in 16S rRNA. The sequence is that of Ribosomal RNA small subunit methyltransferase G from Flavobacterium johnsoniae (strain ATCC 17061 / DSM 2064 / JCM 8514 / BCRC 14874 / CCUG 350202 / NBRC 14942 / NCIMB 11054 / UW101) (Cytophaga johnsonae).